The following is a 211-amino-acid chain: MANTDRPALPHKRAVPPSRADSGPRRRRTKLLDAVAGFGVTLGSMFKKTVTEEYPERPGPVAARYHGRHQLNRYPDGLEKCIGCELCAWACPADAIYVEGADNTEEERFSPGERYGRVYQINYLRCIGCGLCIEACPTRALTMTYDYELADDNRADLIYEKDRLLAPLLPEMAAPPHPRTPGATDKDYYLGNVTAEGLRGVRESQTTGDSR.

Residues 1 to 27 (MANTDRPALPHKRAVPPSRADSGPRRR) form a disordered region. 4Fe-4S ferredoxin-type domains are found at residues 71-101 (LNRYPDGLEKCIGCELCAWACPADAIYVEGA) and 117-146 (RVYQINYLRCIGCGLCIEACPTRALTMTYD). [4Fe-4S] cluster is bound by residues cysteine 81, cysteine 84, cysteine 87, cysteine 91, cysteine 126, cysteine 129, cysteine 132, and cysteine 136.

This sequence belongs to the complex I 23 kDa subunit family. NDH-1 is composed of 14 different subunits. Subunits NuoA, H, J, K, L, M, N constitute the membrane sector of the complex. It depends on [4Fe-4S] cluster as a cofactor.

The protein localises to the cell membrane. It carries out the reaction a quinone + NADH + 5 H(+)(in) = a quinol + NAD(+) + 4 H(+)(out). NDH-1 shuttles electrons from NADH, via FMN and iron-sulfur (Fe-S) centers, to quinones in the respiratory chain. The immediate electron acceptor for the enzyme in this species is believed to be menaquinone. Couples the redox reaction to proton translocation (for every two electrons transferred, four hydrogen ions are translocated across the cytoplasmic membrane), and thus conserves the redox energy in a proton gradient. This chain is NADH-quinone oxidoreductase subunit I, found in Mycobacterium tuberculosis (strain ATCC 25177 / H37Ra).